Consider the following 338-residue polypeptide: tRNA N6-adenosine threonylcarbamoyltransferase (338 aa).

Fe cation is bound by residues histidine 110 and histidine 114. Substrate-binding positions include 132–136 (VLSGG), aspartate 165, glycine 178, and asparagine 274. Aspartate 298 serves as a coordination point for Fe cation.

Belongs to the KAE1 / TsaD family. Requires Fe(2+) as cofactor.

The protein localises to the cytoplasm. The enzyme catalyses L-threonylcarbamoyladenylate + adenosine(37) in tRNA = N(6)-L-threonylcarbamoyladenosine(37) in tRNA + AMP + H(+). Functionally, required for the formation of a threonylcarbamoyl group on adenosine at position 37 (t(6)A37) in tRNAs that read codons beginning with adenine. Is involved in the transfer of the threonylcarbamoyl moiety of threonylcarbamoyl-AMP (TC-AMP) to the N6 group of A37, together with TsaE and TsaB. TsaD likely plays a direct catalytic role in this reaction. The protein is tRNA N6-adenosine threonylcarbamoyltransferase of Borrelia recurrentis (strain A1).